Reading from the N-terminus, the 120-residue chain is NAD(P)H-quinone oxidoreductase subunit 3, chloroplastic (120 aa).

The next 3 membrane-spanning stretches (helical) occupy residues 9–29 (IFWA…LISG), 64–84 (MFAL…PWAM), and 88–108 (VLGV…IVGS).

Belongs to the complex I subunit 3 family. As to quaternary structure, NDH is composed of at least 16 different subunits, 5 of which are encoded in the nucleus.

The protein localises to the plastid. The protein resides in the chloroplast thylakoid membrane. It carries out the reaction a plastoquinone + NADH + (n+1) H(+)(in) = a plastoquinol + NAD(+) + n H(+)(out). The enzyme catalyses a plastoquinone + NADPH + (n+1) H(+)(in) = a plastoquinol + NADP(+) + n H(+)(out). In terms of biological role, NDH shuttles electrons from NAD(P)H:plastoquinone, via FMN and iron-sulfur (Fe-S) centers, to quinones in the photosynthetic chain and possibly in a chloroplast respiratory chain. The immediate electron acceptor for the enzyme in this species is believed to be plastoquinone. Couples the redox reaction to proton translocation, and thus conserves the redox energy in a proton gradient. This chain is NAD(P)H-quinone oxidoreductase subunit 3, chloroplastic, found in Amborella trichopoda.